The following is a 237-amino-acid chain: Large ribosomal subunit protein uL1 (237 aa).

The protein belongs to the universal ribosomal protein uL1 family. As to quaternary structure, part of the 50S ribosomal subunit.

Functionally, binds directly to 23S rRNA. The L1 stalk is quite mobile in the ribosome, and is involved in E site tRNA release. In terms of biological role, protein L1 is also a translational repressor protein, it controls the translation of the L11 operon by binding to its mRNA. This chain is Large ribosomal subunit protein uL1, found in Rickettsia typhi (strain ATCC VR-144 / Wilmington).